The sequence spans 662 residues: Putative cysteine-rich receptor-like protein kinase 16 (662 aa).

Positions 1-26 (MIFIMKLKNLLPIFCFFLVSFSISSA) are cleaved as a signal peptide. 2 Gnk2-homologous domains span residues 27–131 (QKCG…NRSF) and 137–244 (MTPF…LYQF). The Extracellular portion of the chain corresponds to 27 to 277 (QKCGKTGLFK…DDGGKISTRN (251 aa)). N-linked (GlcNAc...) asparagine glycans are attached at residues Asn55, Asn64, Asn106, Asn128, Asn145, Asn152, and Asn206. Residues 278–298 (ILGITVALAFFITVLLVLGYA) form a helical membrane-spanning segment. The Cytoplasmic segment spans residues 299-662 (LSRRRKAYQE…DASITSVDLR (364 aa)). Residues 335-612 (FQKSNKLGHG…VFQMLTNTFL (278 aa)) enclose the Protein kinase domain. ATP contacts are provided by residues 341–349 (LGHGGFGEV) and Lys363. Asp460 acts as the Proton acceptor in catalysis.

This sequence belongs to the protein kinase superfamily. Ser/Thr protein kinase family. CRK subfamily.

It localises to the membrane. It carries out the reaction L-seryl-[protein] + ATP = O-phospho-L-seryl-[protein] + ADP + H(+). The enzyme catalyses L-threonyl-[protein] + ATP = O-phospho-L-threonyl-[protein] + ADP + H(+). In Arabidopsis thaliana (Mouse-ear cress), this protein is Putative cysteine-rich receptor-like protein kinase 16 (CRK16).